The sequence spans 327 residues: G-protein coupled receptor 55 (327 aa).

Residues 1 to 20 (MSQPERDNCSFDSVDKLTRT) lie on the Extracellular side of the membrane. An N-linked (GlcNAc...) asparagine glycan is attached at asparagine 8. The chain crosses the membrane as a helical span at residues 21 to 41 (LQLAVHIPTFLLGLVLNLLAI). The Cytoplasmic segment spans residues 42 to 57 (RGFSAFLKKRKLDYIA). A helical membrane pass occupies residues 58–78 (TSIYMINLAVFDLLLVLSLPF). At 79-93 (KMVLPQVESPLPSFC) the chain is on the extracellular side. A helical membrane pass occupies residues 94–114 (TLVECLYFISMYGSVFTICFI). Over 115–136 (SLDRFLAIQYPILASHLRSPRK) the chain is Cytoplasmic. Residues 137 to 157 (TFGICCIIWMLVWIGSIPIYT) traverse the membrane as a helical segment. At 158 to 179 (FHREVERYKCFHNMSDVTWSAS) the chain is on the extracellular side. Asparagine 170 carries N-linked (GlcNAc...) asparagine glycosylation. A helical membrane pass occupies residues 180–200 (VFFPLEIFGFLLPMGIMGFCS). Residues 201-239 (YRSIHILLRRPDSTEDWVQQRDTKGWVQKRACIWTIATN) are Cytoplasmic-facing. The chain crosses the membrane as a helical span at residues 240-260 (LVIFVVSFLPVHLGFFLQYLV). Over 261 to 279 (RNRFILDCRMKQGISLFLQ) the chain is Extracellular. Residues 280 to 300 (LSLCFSNINCCLDVFCYYFVI) form a helical membrane-spanning segment. The Cytoplasmic segment spans residues 301–327 (KEFRMRIKAHRPSTIKLVNQDTMVSRG).

It belongs to the G-protein coupled receptor 1 family. Highly expressed in splenic plasma cells.

The protein resides in the cell membrane. In terms of biological role, G-protein coupled receptor that binds to several ligands including 2-arachidonoyl lysophosphatidylinositol or lysophosphatidylglucoside with high affinity, leading to rapid and transient activation of numerous intracellular signaling pathways. Induces the Ca(2+) release from intracellular stores via ERK, the heterotrimeric G protein GNA13 and RHOA leading to morphological changes including cell rounding and stress fiber formation. In macrophages, acts downstream of lysophosphatidylglucoside to inhibit the translocation of the phospholipid-transporting ABCA1 to plasma membrane and subsequent cholesterol efflux leading to lipid accumulation and foam cell formation. May be involved in hyperalgesia associated with inflammatory and neuropathic pain. This chain is G-protein coupled receptor 55 (Gpr55), found in Mus musculus (Mouse).